Here is a 64-residue protein sequence, read N- to C-terminus: Small ribosomal subunit protein eS17 (64 aa).

It belongs to the eukaryotic ribosomal protein eS17 family.

This is Small ribosomal subunit protein eS17 from Methanospirillum hungatei JF-1 (strain ATCC 27890 / DSM 864 / NBRC 100397 / JF-1).